The chain runs to 380 residues: Cytochrome b (380 aa).

A run of 4 helical transmembrane segments spans residues 34 to 54 (FGSL…LLAM), 78 to 99 (WLIR…YLHI), 114 to 134 (WNVG…GYVL), and 179 to 199 (FFAL…VHLT). Heme b is bound by residues histidine 84 and histidine 98. Residues histidine 183 and histidine 197 each contribute to the heme b site. Histidine 202 provides a ligand contact to a ubiquinone. 4 consecutive transmembrane segments (helical) span residues 227 to 247 (IKDI…ALFS), 289 to 309 (LGGV…PLLH), 321 to 341 (LSQI…WIGS), and 348 to 368 (FIII…VLFP).

This sequence belongs to the cytochrome b family. In terms of assembly, the cytochrome bc1 complex contains 11 subunits: 3 respiratory subunits (MT-CYB, CYC1 and UQCRFS1), 2 core proteins (UQCRC1 and UQCRC2) and 6 low-molecular weight proteins (UQCRH/QCR6, UQCRB/QCR7, UQCRQ/QCR8, UQCR10/QCR9, UQCR11/QCR10 and a cleavage product of UQCRFS1). This cytochrome bc1 complex then forms a dimer. Heme b serves as cofactor.

It localises to the mitochondrion inner membrane. Component of the ubiquinol-cytochrome c reductase complex (complex III or cytochrome b-c1 complex) that is part of the mitochondrial respiratory chain. The b-c1 complex mediates electron transfer from ubiquinol to cytochrome c. Contributes to the generation of a proton gradient across the mitochondrial membrane that is then used for ATP synthesis. The chain is Cytochrome b (MT-CYB) from Vireo olivaceus (Red-eyed vireo).